A 43-amino-acid polypeptide reads, in one-letter code: Bacteriocin mundticin (43 aa).

A disulfide bridge connects residues C9 and C14.

Its function is as follows. This bacteriocin inhibits the growth of several Gram-positive bacteria, especially pathogenic L.monocytogenes and C.botulinum but has no effect on the growth of a number of yeasts and Gram-negative bacteria. In Enterococcus mundtii, this protein is Bacteriocin mundticin.